Here is a 238-residue protein sequence, read N- to C-terminus: 1-(5-phosphoribosyl)-5-[(5-phosphoribosylamino)methylideneamino] imidazole-4-carboxamide isomerase (238 aa).

Asp-8 acts as the Proton acceptor in catalysis. Asp-129 serves as the catalytic Proton donor.

Belongs to the HisA/HisF family.

It is found in the cytoplasm. It catalyses the reaction 1-(5-phospho-beta-D-ribosyl)-5-[(5-phospho-beta-D-ribosylamino)methylideneamino]imidazole-4-carboxamide = 5-[(5-phospho-1-deoxy-D-ribulos-1-ylimino)methylamino]-1-(5-phospho-beta-D-ribosyl)imidazole-4-carboxamide. It functions in the pathway amino-acid biosynthesis; L-histidine biosynthesis; L-histidine from 5-phospho-alpha-D-ribose 1-diphosphate: step 4/9. This chain is 1-(5-phosphoribosyl)-5-[(5-phosphoribosylamino)methylideneamino] imidazole-4-carboxamide isomerase, found in Clostridium novyi (strain NT).